We begin with the raw amino-acid sequence, 900 residues long: Phosphoenolpyruvate carboxylase (900 aa).

Catalysis depends on residues H140 and K568.

It belongs to the PEPCase type 1 family. Mg(2+) serves as cofactor.

The enzyme catalyses oxaloacetate + phosphate = phosphoenolpyruvate + hydrogencarbonate. Its function is as follows. Forms oxaloacetate, a four-carbon dicarboxylic acid source for the tricarboxylic acid cycle. This chain is Phosphoenolpyruvate carboxylase, found in Neisseria gonorrhoeae (strain ATCC 700825 / FA 1090).